The primary structure comprises 419 residues: Enolase (419 aa).

Residue Gln-160 participates in (2R)-2-phosphoglycerate binding. Glu-204 serves as the catalytic Proton donor. 3 residues coordinate Mg(2+): Asp-240, Glu-283, and Asp-309. (2R)-2-phosphoglycerate-binding residues include Lys-334, Arg-363, Ser-364, and Lys-385. Lys-334 serves as the catalytic Proton acceptor.

This sequence belongs to the enolase family. Mg(2+) serves as cofactor.

It is found in the cytoplasm. It localises to the secreted. The protein localises to the cell surface. The enzyme catalyses (2R)-2-phosphoglycerate = phosphoenolpyruvate + H2O. Its pathway is carbohydrate degradation; glycolysis; pyruvate from D-glyceraldehyde 3-phosphate: step 4/5. Its function is as follows. Catalyzes the reversible conversion of 2-phosphoglycerate (2-PG) into phosphoenolpyruvate (PEP). It is essential for the degradation of carbohydrates via glycolysis. The sequence is that of Enolase from Pyrobaculum aerophilum (strain ATCC 51768 / DSM 7523 / JCM 9630 / CIP 104966 / NBRC 100827 / IM2).